Reading from the N-terminus, the 658-residue chain is Exoribonuclease 2 (658 aa).

One can recognise an RNB domain in the interval 189–530 (REDLTSLYFT…VNHRLIKQVL (342 aa)). An S1 motif domain is found at 576-658 (AVEFDCEIAD…ETRSIVGNII (83 aa)).

This sequence belongs to the RNR ribonuclease family. RNase II subfamily.

Its subcellular location is the cytoplasm. It catalyses the reaction Exonucleolytic cleavage in the 3'- to 5'-direction to yield nucleoside 5'-phosphates.. In terms of biological role, involved in mRNA degradation. Hydrolyzes single-stranded polyribonucleotides processively in the 3' to 5' direction. The chain is Exoribonuclease 2 from Actinobacillus pleuropneumoniae serotype 5b (strain L20).